The primary structure comprises 479 residues: Glutamate--tRNA ligase (479 aa).

A 'HIGH' region motif is present at residues 9–19 (PSPTGLFHIGT). The 'KMSKS' region signature appears at 248-252 (KLSKR). K251 provides a ligand contact to ATP.

It belongs to the class-I aminoacyl-tRNA synthetase family. Glutamate--tRNA ligase type 1 subfamily. As to quaternary structure, monomer.

The protein localises to the cytoplasm. The catalysed reaction is tRNA(Glu) + L-glutamate + ATP = L-glutamyl-tRNA(Glu) + AMP + diphosphate. Catalyzes the attachment of glutamate to tRNA(Glu) in a two-step reaction: glutamate is first activated by ATP to form Glu-AMP and then transferred to the acceptor end of tRNA(Glu). This Prochlorococcus marinus (strain MIT 9215) protein is Glutamate--tRNA ligase.